We begin with the raw amino-acid sequence, 296 residues long: GTPase Era (296 aa).

The Era-type G domain occupies 3-170 (KSGFVTIIGR…IELMVKHLNE (168 aa)). The G1 stretch occupies residues 11–18 (GRPNVGKS). Residue 11–18 (GRPNVGKS) coordinates GTP. Residues 37-41 (QTTRN) form a G2 region. The G3 stretch occupies residues 58–61 (DTPG). GTP is bound by residues 58-62 (DTPGM) and 120-123 (NKID). A G4 region spans residues 120–123 (NKID). The interval 149 to 151 (ISA) is G5. The KH type-2 domain occupies 201 to 277 (LSQEVPHGIA…NMKIWVKVKK (77 aa)).

This sequence belongs to the TRAFAC class TrmE-Era-EngA-EngB-Septin-like GTPase superfamily. Era GTPase family. In terms of assembly, monomer.

The protein resides in the cytoplasm. It localises to the cell membrane. Its function is as follows. An essential GTPase that binds both GDP and GTP, with rapid nucleotide exchange. Plays a role in 16S rRNA processing and 30S ribosomal subunit biogenesis and possibly also in cell cycle regulation and energy metabolism. The chain is GTPase Era from Clostridium acetobutylicum (strain ATCC 824 / DSM 792 / JCM 1419 / IAM 19013 / LMG 5710 / NBRC 13948 / NRRL B-527 / VKM B-1787 / 2291 / W).